Consider the following 307-residue polypeptide: N-acetylmuramic acid 6-phosphate etherase (307 aa).

Residues 57 to 220 (IIEAFKTNGR…TTASMIGVGK (164 aa)) enclose the SIS domain. Glu85 functions as the Proton donor in the catalytic mechanism. Residue Glu116 is part of the active site.

This sequence belongs to the GCKR-like family. MurNAc-6-P etherase subfamily. Homodimer.

It carries out the reaction N-acetyl-D-muramate 6-phosphate + H2O = N-acetyl-D-glucosamine 6-phosphate + (R)-lactate. It participates in amino-sugar metabolism; N-acetylmuramate degradation. Specifically catalyzes the cleavage of the D-lactyl ether substituent of MurNAc 6-phosphate, producing GlcNAc 6-phosphate and D-lactate. This Alkaliphilus metalliredigens (strain QYMF) protein is N-acetylmuramic acid 6-phosphate etherase.